Reading from the N-terminus, the 159-residue chain is Small ribosomal subunit protein uS7 (159 aa).

It belongs to the universal ribosomal protein uS7 family. Part of the 30S ribosomal subunit. Contacts proteins S9 and S11.

Functionally, one of the primary rRNA binding proteins, it binds directly to 16S rRNA where it nucleates assembly of the head domain of the 30S subunit. Is located at the subunit interface close to the decoding center, probably blocks exit of the E-site tRNA. This is Small ribosomal subunit protein uS7 from Wolbachia sp. subsp. Brugia malayi (strain TRS).